The sequence spans 307 residues: Mycothiol acetyltransferase (307 aa).

2 N-acetyltransferase domains span residues 12-157 (TRTD…PPLP) and 160-307 (VTLR…YQLG). Glu-43 is a 1D-myo-inositol 2-(L-cysteinylamino)-2-deoxy-alpha-D-glucopyranoside binding site. Acetyl-CoA is bound at residue 87 to 89 (LAV). Residues Glu-187, Lys-227, and Glu-239 each contribute to the 1D-myo-inositol 2-(L-cysteinylamino)-2-deoxy-alpha-D-glucopyranoside site. Residues 243–245 (LGV) and 250–256 (HGGGLGK) each bind acetyl-CoA. Tyr-278 provides a ligand contact to 1D-myo-inositol 2-(L-cysteinylamino)-2-deoxy-alpha-D-glucopyranoside.

This sequence belongs to the acetyltransferase family. MshD subfamily. Monomer.

The enzyme catalyses 1D-myo-inositol 2-(L-cysteinylamino)-2-deoxy-alpha-D-glucopyranoside + acetyl-CoA = mycothiol + CoA + H(+). Functionally, catalyzes the transfer of acetyl from acetyl-CoA to desacetylmycothiol (Cys-GlcN-Ins) to form mycothiol. The polypeptide is Mycothiol acetyltransferase (Salinispora tropica (strain ATCC BAA-916 / DSM 44818 / JCM 13857 / NBRC 105044 / CNB-440)).